Reading from the N-terminus, the 688-residue chain is MADLEAVLADVSYLMAMEKSKATPAARASKKIVLPEPSIRSVMQKYLEERHEITFDKIFNQRIGFLLFKDFCLNEINEAVPQVKFYEEIKEYEKLENEEDRLCRSRQIYDTYIMKELLSCSHPFSKQAVEHVQSHLSKKQVTSTLFQPYIEEICESLRGSIFQKFMESDKFTRFCQWKNVELNIHLTMNDFSVHRIIGRGGFGEVYGCRKADTGKMYAMKCLDKKRIKMKQGETLALNERIMLSLVSTGDCPFIVCMTYAFHTPDKLCFILDLMNGGDLHYHLSQHGVFSEKEMRFYATEIILGLEHMHNRFVVYRDLKPANILLDEHGHVRISDLGLACDFSKKKPHASVGTHGYMAPEVLQKGTAYDSSADWFSLGCMLFKLLRGHSPFRQHKTKDKHEIDRMTLTMNVELPDVFSPELKSLLEGLLQRDVSKRLGCHGGSAQELKTHDFFRGIDWQHVYLQKYPPPLIPPRGEVNAADAFDIGSFDEEDTKGIKLLDCDQELYKNFPLVISERWQQEVAETVYEAVNADTDKIEARKRAKNKQLGHEEDYALGRDCIVHGYMLKLGNPFLTQWQRRYFYLFPNRLEWRGEGESRQSLLTMEQIVSVEETQIKDKKCILLRIKGGKQFVLQCESDPEFVQWKKELTETFMEAQRLLRRAPKFLNKSRSAVVELSKPPLCHRNSNGL.

The N-terminal stretch occupies residues 1-190; the sequence is MADLEAVLAD…ELNIHLTMND (190 aa). The RGS domain maps to 54–175; it reads TFDKIFNQRI…MESDKFTRFC (122 aa). The Protein kinase domain occupies 191–453; it reads FSVHRIIGRG…AQELKTHDFF (263 aa). Residues 197–205 and lysine 220 each bind ATP; that span reads IGRGGFGEV. Aspartate 317 serves as the catalytic Proton acceptor. The region spanning 454-521 is the AGC-kinase C-terminal domain; it reads RGIDWQHVYL…VISERWQQEV (68 aa). The region spanning 558–652 is the PH domain; it reads DCIVHGYMLK…WKKELTETFM (95 aa).

It belongs to the protein kinase superfamily. AGC Ser/Thr protein kinase family. GPRK subfamily. In terms of assembly, interacts with GIT1. In terms of processing, ubiquitinated. Ubiquitous; brain, spleen &gt; heart, lung &gt; kidney.

The protein resides in the postsynapse. The protein localises to the presynapse. The enzyme catalyses [beta-adrenergic receptor] + ATP = [beta-adrenergic receptor]-phosphate + ADP + H(+). Functionally, specifically phosphorylates the agonist-occupied form of the beta-adrenergic and closely related receptors. This is G protein-coupled receptor kinase 3 from Bos taurus (Bovine).